Consider the following 545-residue polypeptide: Adenine deaminase (545 aa).

It belongs to the metallo-dependent hydrolases superfamily. Adenine deaminase family. It depends on Mn(2+) as a cofactor.

It carries out the reaction adenine + H2O + H(+) = hypoxanthine + NH4(+). The protein is Adenine deaminase of Salinibacter ruber (strain DSM 13855 / M31).